We begin with the raw amino-acid sequence, 115 residues long: Protein V2 (115 aa).

It belongs to the geminiviridae protein AV2/V2 family. As to quaternary structure, interacts with host SGS3.

It is found in the host cytoplasm. Its subcellular location is the host perinuclear region. In terms of biological role, through its interaction with host SGS3, acts as a suppressor of RNA-mediated gene silencing, also known as post-transcriptional gene silencing (PTGS), a mechanism of plant viral defense that limits the accumulation of viral RNAs. The protein is Protein V2 of Tomato yellow leaf curl Sardinia virus (isolate Spain-2) (TYLCSV).